The primary structure comprises 251 residues: Ubiquinone/menaquinone biosynthesis C-methyltransferase UbiE (251 aa).

S-adenosyl-L-methionine is bound by residues Thr74, Asp95, 123-124, and Ser140; that span reads NA.

Belongs to the class I-like SAM-binding methyltransferase superfamily. MenG/UbiE family.

The catalysed reaction is a 2-demethylmenaquinol + S-adenosyl-L-methionine = a menaquinol + S-adenosyl-L-homocysteine + H(+). It catalyses the reaction a 2-methoxy-6-(all-trans-polyprenyl)benzene-1,4-diol + S-adenosyl-L-methionine = a 5-methoxy-2-methyl-3-(all-trans-polyprenyl)benzene-1,4-diol + S-adenosyl-L-homocysteine + H(+). Its pathway is quinol/quinone metabolism; menaquinone biosynthesis; menaquinol from 1,4-dihydroxy-2-naphthoate: step 2/2. The protein operates within cofactor biosynthesis; ubiquinone biosynthesis. Its function is as follows. Methyltransferase required for the conversion of demethylmenaquinol (DMKH2) to menaquinol (MKH2) and the conversion of 2-polyprenyl-6-methoxy-1,4-benzoquinol (DDMQH2) to 2-polyprenyl-3-methyl-6-methoxy-1,4-benzoquinol (DMQH2). This is Ubiquinone/menaquinone biosynthesis C-methyltransferase UbiE from Pectobacterium carotovorum subsp. carotovorum (strain PC1).